A 142-amino-acid chain; its full sequence is Large ribosomal subunit protein uL11 (142 aa).

This sequence belongs to the universal ribosomal protein uL11 family. In terms of assembly, part of the ribosomal stalk of the 50S ribosomal subunit. Interacts with L10 and the large rRNA to form the base of the stalk. L10 forms an elongated spine to which L12 dimers bind in a sequential fashion forming a multimeric L10(L12)X complex. Post-translationally, one or more lysine residues are methylated.

Its function is as follows. Forms part of the ribosomal stalk which helps the ribosome interact with GTP-bound translation factors. This chain is Large ribosomal subunit protein uL11, found in Xanthomonas axonopodis pv. citri (strain 306).